A 134-amino-acid polypeptide reads, in one-letter code: Small ribosomal subunit protein uS8c (134 aa).

Belongs to the universal ribosomal protein uS8 family. In terms of assembly, part of the 30S ribosomal subunit.

It is found in the plastid. The protein localises to the chloroplast. Its function is as follows. One of the primary rRNA binding proteins, it binds directly to 16S rRNA central domain where it helps coordinate assembly of the platform of the 30S subunit. The sequence is that of Small ribosomal subunit protein uS8c (rps8) from Vitis vinifera (Grape).